A 383-amino-acid polypeptide reads, in one-letter code: Na(+)/H(+) antiporter NhaA (383 aa).

11 helical membrane-spanning segments follow: residues 10–30 (LIGG…NNSP), 56–76 (LMHW…GLEI), 91–111 (IITP…IYLS), 121–141 (GWAI…ALLG), 150–170 (LLVI…IAIF), 174–194 (SLSL…IICN), 206–226 (VVLG…ATLA), 254–274 (PWII…ISFS), 275–295 (GISF…GLFV), 327–347 (GISL…VLAF), and 355–375 (AIKI…YIVL).

This sequence belongs to the NhaA Na(+)/H(+) (TC 2.A.33) antiporter family.

The protein localises to the cell inner membrane. It carries out the reaction Na(+)(in) + 2 H(+)(out) = Na(+)(out) + 2 H(+)(in). Na(+)/H(+) antiporter that extrudes sodium in exchange for external protons. The polypeptide is Na(+)/H(+) antiporter NhaA (Francisella tularensis subsp. novicida (strain U112)).